The sequence spans 1379 residues: Vascular endothelial growth factor receptor 3 (1379 aa).

The signal sequence occupies residues 1 to 19 (MKRVCTLPLWLWLGIVSEA). The Extracellular segment spans residues 20-788 (DLVSSYSMTP…EGSDDKTNVE (769 aa)). Ig-like C2-type domains lie at 30–136 (PTLS…TAVS), 160–222 (KENT…IDNK), 240–335 (DIQL…TDVI), 340–421 (PFIN…KRIS), 430–566 (PRIH…FYVT), 569–684 (PDGF…KYIS), and 691–777 (PRLK…ASVS). Disulfide bonds link Cys51–Cys120 and Cys167–Cys215. The tract at residues 73 to 93 (RRWNSQPQQRPVGAGNPEEDC) is disordered. Asn113, Asn175, Asn260, and Asn308 each carry an N-linked (GlcNAc...) asparagine glycan. The cysteines at positions 261 and 319 are disulfide-linked. 3 cysteine pairs are disulfide-bonded: Cys453-Cys548, Cys474-Cys500, and Cys592-Cys666. 7 N-linked (GlcNAc...) asparagine glycosylation sites follow: Asn529, Asn541, Asn596, Asn608, Asn655, Asn696, and Asn703. Cysteines 712 and 761 form a disulfide. N-linked (GlcNAc...) asparagine glycosylation is present at Asn771. Residues 789-809 (IVILIGTGVIAVFFWILLIII) traverse the membrane as a helical segment. Residues 810 to 1379 (FCNIKRPAHA…LHASFFSEQY (570 aa)) lie on the Cytoplasmic side of the membrane. The Protein kinase domain maps to 858-1185 (LRLGKVLGHG…DLVEILGNLL (328 aa)). Residues 864–872 (LGHGAFGKV) and Lys892 contribute to the ATP site. Asp1049 (proton acceptor) is an active-site residue. Residues Tyr1075 and Tyr1080 each carry the phosphotyrosine; by autocatalysis modification. The disordered stretch occupies residues 1196-1224 (YIPLNDSHSSEDDGFSQVPSSAQQNSDEE). A phosphotyrosine; by autocatalysis mark is found at Tyr1239, Tyr1240, Tyr1274, Tyr1342, and Tyr1346. The disordered stretch occupies residues 1299-1379 (RHRKEGGFSS…LHASFFSEQY (81 aa)). Polar residues predominate over residues 1332–1343 (YGSQVGGQTFYN).

This sequence belongs to the protein kinase superfamily. Tyr protein kinase family. CSF-1/PDGF receptor subfamily. As to quaternary structure, interacts with VEGFC and VEGFD. Monomer in the absence of bound VEGFC or VEGFD. Homodimer in the presence of bound VEGFC or VEGFD. Autophosphorylated on tyrosine residues upon ligand binding. Autophosphorylation occurs in trans, i.e. one subunit of the dimeric receptor phosphorylates tyrosine residues on the other subunit.

It is found in the cell membrane. The protein localises to the cytoplasm. It localises to the nucleus. The enzyme catalyses L-tyrosyl-[protein] + ATP = O-phospho-L-tyrosyl-[protein] + ADP + H(+). Its activity is regulated as follows. Present in an inactive conformation in the absence of bound ligand. Binding of VEGFC or VEGFD leads to dimerization and activation by autophosphorylation on tyrosine residues. Its function is as follows. Tyrosine-protein kinase that acts as a cell-surface receptor for VEGFC and VEGFD, and plays an essential role in lymphangiogenesis and in the development of the vascular network and the cardiovascular system during embryonic development. Promotes proliferation, survival and migration of endothelial cells, and regulates angiogenic sprouting. Mediates activation of the MAPK1/ERK2, MAPK3/ERK1 signaling pathway, of MAPK8 and the JUN signaling pathway, and of the AKT1 signaling pathway. The sequence is that of Vascular endothelial growth factor receptor 3 (FLT4) from Coturnix coturnix (Common quail).